Here is a 420-residue protein sequence, read N- to C-terminus: Probable pectate lyase C (420 aa).

Residues 1–20 form the signal peptide; sequence MKLSAPLLVSLAAFSQAVTA. 3 N-linked (GlcNAc...) asparagine glycosylation sites follow: asparagine 49, asparagine 165, and asparagine 202. Arginine 205 is a catalytic residue. Residues 262-297 enclose the EF-hand domain; sequence NANFHGYVDNNYYDPDKDGQLDGSELGVSSSNYGGM. Residues aspartate 275, aspartate 277, aspartate 279, glutamine 281, and glutamate 286 each coordinate Ca(2+). A disordered region spans residues 357–395; that stretch reads ATMGGPGTLNGGTPAKDTDGDGIPDEAEKQLGTDPNTND. Asparagine 394 carries an N-linked (GlcNAc...) asparagine glycan.

Belongs to the polysaccharide lyase 1 family. The cofactor is Ca(2+).

It is found in the secreted. The enzyme catalyses Eliminative cleavage of (1-&gt;4)-alpha-D-galacturonan to give oligosaccharides with 4-deoxy-alpha-D-galact-4-enuronosyl groups at their non-reducing ends.. In terms of biological role, pectinolytic enzyme consist of four classes of enzymes: pectin lyase, polygalacturonase, pectin methylesterase and rhamnogalacturonase. Among pectinolytic enzymes, pectin lyase is the most important in depolymerization of pectin, since it cleaves internal glycosidic bonds of highly methylated pectins. Favors pectate, the anion, over pectin, the methyl ester. The polypeptide is Probable pectate lyase C (plyC) (Neosartorya fischeri (strain ATCC 1020 / DSM 3700 / CBS 544.65 / FGSC A1164 / JCM 1740 / NRRL 181 / WB 181) (Aspergillus fischerianus)).